The primary structure comprises 129 residues: Small ribosomal subunit protein uS11 (129 aa).

It belongs to the universal ribosomal protein uS11 family. In terms of assembly, part of the 30S ribosomal subunit. Interacts with proteins S7 and S18. Binds to IF-3.

Functionally, located on the platform of the 30S subunit, it bridges several disparate RNA helices of the 16S rRNA. Forms part of the Shine-Dalgarno cleft in the 70S ribosome. This is Small ribosomal subunit protein uS11 from Azobacteroides pseudotrichonymphae genomovar. CFP2.